We begin with the raw amino-acid sequence, 65 residues long: Potassium channel toxin alpha-KTx 12.6 (65 aa).

A signal peptide spans 1 to 22; that stretch reads MKMKIFIITIVIALFITSIVEA. 3 disulfides stabilise this stretch: cysteine 30–cysteine 51, cysteine 36–cysteine 56, and cysteine 40–cysteine 58.

It belongs to the short scorpion toxin superfamily. Potassium channel inhibitor family. Alpha-KTx 12 subfamily. In terms of tissue distribution, expressed by the venom gland.

It localises to the secreted. In terms of biological role, inhibits voltage-gated potassium channels. The protein is Potassium channel toxin alpha-KTx 12.6 of Lychas mucronatus (Chinese swimming scorpion).